Reading from the N-terminus, the 405-residue chain is Octaketide synthase 3 (405 aa).

The span at 1–10 (MGSIAESSPL) shows a compositional bias: polar residues. Positions 1–22 (MGSIAESSPLMSRENVEGIRKA) are disordered. Residue C176 is part of the active site. Residues S283 and 320–323 (GGRA) each bind CoA.

Belongs to the thiolase-like superfamily. Chalcone/stilbene synthases family. In terms of assembly, homodimer.

The protein operates within secondary metabolite biosynthesis; flavonoid biosynthesis. Catalyzes the iterative condensations of 8 molecules of malonyl-CoA to produce aromatic octaketides, SEK4 and SEK4b, the products of the minimal polyketide synthase for the benzoisochromanequinone actinorhodin. May be involved in the biosynthesis of the octaketide barbaloin. In Aloe arborescens (Kidachi aloe), this protein is Octaketide synthase 3 (PKS5).